A 271-amino-acid polypeptide reads, in one-letter code: Metal-staphylopine import system ATP-binding protein CntD (271 aa).

An ABC transporter domain is found at 6 to 251 (VKHLTITDTW…PEHVYTKYLL (246 aa)). 38–45 (GESGSGKS) contributes to the ATP binding site.

It belongs to the ABC transporter superfamily. As to quaternary structure, the complex is composed of two ATP-binding proteins (CntD and CntF), two transmembrane proteins (CntB and CntC) and a solute-binding protein (CntA).

The protein resides in the cell membrane. Its activity is regulated as follows. Nickel/cobalt import is reduced in the presence of zinc. Part of the ABC transporter complex CntABCDF (Opp1) involved in the uptake of metal in complex with the metallophore staphylopine (StP). Involved in the import of divalent metals ions such as nickel, cobalt and zinc. Probably responsible for energy coupling to the transport system. Plays a major role in nickel/cobalt import in zinc-depleted conditions. Contributes to virulence. Required for full urease activity in vitro. The polypeptide is Metal-staphylopine import system ATP-binding protein CntD (Staphylococcus aureus (strain NCTC 8325 / PS 47)).